We begin with the raw amino-acid sequence, 267 residues long: Small ribosomal subunit protein uS2c (267 aa).

A disordered region spans residues 237 to 267 (KQKIKKTGVKISGNRRTSSITKKRNPASSKI). Residues 250 to 267 (NRRTSSITKKRNPASSKI) are compositionally biased toward polar residues.

Belongs to the universal ribosomal protein uS2 family.

Its subcellular location is the plastid. It is found in the chloroplast. In Chlorella vulgaris (Green alga), this protein is Small ribosomal subunit protein uS2c (rps2).